A 326-amino-acid chain; its full sequence is 4-hydroxythreonine-4-phosphate dehydrogenase (326 aa).

2 residues coordinate substrate: H132 and T133. Residues H163, H208, and H263 each contribute to the a divalent metal cation site. K271, N280, and R289 together coordinate substrate.

This sequence belongs to the PdxA family. As to quaternary structure, homodimer. Zn(2+) is required as a cofactor. The cofactor is Mg(2+). It depends on Co(2+) as a cofactor.

It localises to the cytoplasm. It catalyses the reaction 4-(phosphooxy)-L-threonine + NAD(+) = 3-amino-2-oxopropyl phosphate + CO2 + NADH. The protein operates within cofactor biosynthesis; pyridoxine 5'-phosphate biosynthesis; pyridoxine 5'-phosphate from D-erythrose 4-phosphate: step 4/5. In terms of biological role, catalyzes the NAD(P)-dependent oxidation of 4-(phosphooxy)-L-threonine (HTP) into 2-amino-3-oxo-4-(phosphooxy)butyric acid which spontaneously decarboxylates to form 3-amino-2-oxopropyl phosphate (AHAP). This chain is 4-hydroxythreonine-4-phosphate dehydrogenase, found in Roseobacter denitrificans (strain ATCC 33942 / OCh 114) (Erythrobacter sp. (strain OCh 114)).